Consider the following 453-residue polypeptide: TATA box-binding protein-associated factor RNA polymerase I subunit A (453 aa).

Component of the transcription factor SL1/TIF-IB complex, composed of TBP and at least TAF1A, TAF1B, TAF1C and TAF1D. In the complex interacts directly with TBP, TAF1A and TAF1B. Interaction of the SL1/TIF-IB subunits with TBP excludes interaction of TBP with the transcription factor IID (TFIID) subunits. Interacts with UBFT. Interacts with CEBPA (isoform 1 and isoform 4). Part of Pol I pre-initiation complex (PIC), in which Pol I core assembles with RRN3 and promoter-bound UTBF and SL1/TIF-IB complex.

The protein resides in the nucleus. Its subcellular location is the nucleolus. In terms of biological role, component of the transcription factor SL1/TIF-IB complex, which is involved in the assembly of the PIC (pre-initiation complex) during RNA polymerase I-dependent transcription. The rate of PIC formation probably is primarily dependent on the rate of association of SL1/TIF-IB with the rDNA promoter. SL1/TIF-IB is involved in stabilization of nucleolar transcription factor 1/UBTF on rDNA. Formation of SL1/TIF-IB excludes the association of TBP with TFIID subunits. In Mus musculus (Mouse), this protein is TATA box-binding protein-associated factor RNA polymerase I subunit A (Taf1a).